Here is a 354-residue protein sequence, read N- to C-terminus: Rhodopsin (354 aa).

Residues 1-36 are Extracellular-facing; that stretch reads MNGTEGPYFYVPMVNTTGIVRSPYEYPQYYLVSPAA. N-linked (GlcNAc...) asparagine glycosylation is found at N2 and N15. A helical transmembrane segment spans residues 37–61; it reads YACLGAYMFFLILVGFPVNFLTLYV. The Cytoplasmic segment spans residues 62–73; it reads TIEHKKLRTPLN. Residues 74–96 traverse the membrane as a helical segment; that stretch reads YILLNLAVADLFMVFGGFTTTIY. The Extracellular segment spans residues 97-110; the sequence is TSMHGYFVLGRLGC. C110 and C187 are oxidised to a cystine. The chain crosses the membrane as a helical span at residues 111–133; it reads NLEGYFATLGGEIGLWSLVVLAV. The 'Ionic lock' involved in activated form stabilization signature appears at 134–136; the sequence is ERW. Over 134–152 the chain is Cytoplasmic; sequence ERWLVVCKPISNFRFTENH. Residues 153–173 traverse the membrane as a helical segment; it reads AIMGLVFTWIMANACAAPPLL. The Extracellular segment spans residues 174–202; that stretch reads GWSRYIPEGMQCSCGVDYYTRAEGFNNES. The chain crosses the membrane as a helical span at residues 203–224; that stretch reads FVIYMFICHFCIPLVVVFFCYG. Over 225–252 the chain is Cytoplasmic; that stretch reads RLLCAVKEAAAAQQESETTQRAEREVTR. A helical transmembrane segment spans residues 253–274; sequence MVVILVIGFLVCWTPYASVAWY. At 275–286 the chain is on the extracellular side; it reads IFSNQGSEFGPL. A helical membrane pass occupies residues 287–308; that stretch reads FMTIPAFFAKSSSIYNPMIYIC. Position 296 is an N6-(retinylidene)lysine (K296). Topologically, residues 309-354 are cytoplasmic; that stretch reads MNKQFRHCMITTLCCGKNPFEEEEGASTTASKTEASSVSSSSVSPA. 2 S-palmitoyl cysteine lipidation sites follow: C322 and C323. Residues 333-354 are disordered; it reads GASTTASKTEASSVSSSSVSPA. Positions 334 to 354 are enriched in low complexity; it reads ASTTASKTEASSVSSSSVSPA.

Belongs to the G-protein coupled receptor 1 family. Opsin subfamily. In terms of processing, phosphorylated on some or all of the serine and threonine residues present in the C-terminal region. Contains one covalently linked retinal chromophore.

Its subcellular location is the membrane. It is found in the cell projection. It localises to the cilium. The protein localises to the photoreceptor outer segment. Functionally, photoreceptor required for image-forming vision at low light intensity. While most salt water fish species use retinal as chromophore, most freshwater fish use 3-dehydroretinal, or a mixture of retinal and 3-dehydroretinal. Light-induced isomerization of 11-cis to all-trans retinal triggers a conformational change that activates signaling via G-proteins. Subsequent receptor phosphorylation mediates displacement of the bound G-protein alpha subunit by arrestin and terminates signaling. This Gambusia affinis (Western mosquitofish) protein is Rhodopsin (rho).